The primary structure comprises 158 residues: 2-C-methyl-D-erythritol 2,4-cyclodiphosphate synthase (158 aa).

Positions 9 and 11 each coordinate a divalent metal cation. 4-CDP-2-C-methyl-D-erythritol 2-phosphate is bound by residues 9-11 (DVH) and 35-36 (HS). Histidine 43 contacts a divalent metal cation. 4-CDP-2-C-methyl-D-erythritol 2-phosphate-binding positions include 57 to 59 (DIG), 62 to 66 (FPDTD), 101 to 107 (AQKPKMA), 133 to 136 (TTTE), phenylalanine 140, and arginine 143.

Belongs to the IspF family. As to quaternary structure, homotrimer. Requires a divalent metal cation as cofactor.

It carries out the reaction 4-CDP-2-C-methyl-D-erythritol 2-phosphate = 2-C-methyl-D-erythritol 2,4-cyclic diphosphate + CMP. It functions in the pathway isoprenoid biosynthesis; isopentenyl diphosphate biosynthesis via DXP pathway; isopentenyl diphosphate from 1-deoxy-D-xylulose 5-phosphate: step 4/6. Functionally, involved in the biosynthesis of isopentenyl diphosphate (IPP) and dimethylallyl diphosphate (DMAPP), two major building blocks of isoprenoid compounds. Catalyzes the conversion of 4-diphosphocytidyl-2-C-methyl-D-erythritol 2-phosphate (CDP-ME2P) to 2-C-methyl-D-erythritol 2,4-cyclodiphosphate (ME-CPP) with a corresponding release of cytidine 5-monophosphate (CMP). In Bacillus pumilus (strain SAFR-032), this protein is 2-C-methyl-D-erythritol 2,4-cyclodiphosphate synthase.